A 316-amino-acid polypeptide reads, in one-letter code: MTSKNSIQKALYLAFERLQWSELRDSVPLTLSEQDLENLRGINEKISLSEVTDIYLPLSRLLNLIVKAKQQRGLVVDEFLGQKPSRSPYIISIAGSVAVGKSTTARILQALLRHWPEHPKVDLVTTDGFLYPLADLKRKGLLQRKGFPESYDMKMLVEFISAVKSGQPHVKAPIYSHVTYDRVKNQHQTVSQPDILILEGLNVLQTGLDSPVDTRRPFVSDFVDFSIYVDAEEPLLKQWYKERFLQFRSGAFSDKKSYFHHYSTLTDDEANTIAANIWDTINGPNLQLNIQPTRERAHLILQKGQDHLMSHVLMRK.

95-102 (GSVAVGKS) is an ATP binding site.

The protein belongs to the prokaryotic pantothenate kinase family.

It localises to the cytoplasm. It carries out the reaction (R)-pantothenate + ATP = (R)-4'-phosphopantothenate + ADP + H(+). It functions in the pathway cofactor biosynthesis; coenzyme A biosynthesis; CoA from (R)-pantothenate: step 1/5. The protein is Pantothenate kinase of Shewanella baltica (strain OS195).